The sequence spans 448 residues: MAKKTSLFECQHCGFTSPKWLGKCVQCNAWESFIELNQTQKEVLNALKKPLPQVQKSVSIAEIEHEEVIKFSSTQSELDIVLGGGIAKGGLYLVGGSPGVGKSTLLLKVASGLAKNQQKVLYVSGEESLSQIKMRATRLDCIEEELYLLNEINWPVIKANMESENYFACVIDSIQTLYSPEISSAPGSISQVREITFELMRLAKTRDIAIFIIGHITKEGSIAGPRVLEHMVDSVLYFEGDPSRELRILRSFKNRFGPTSEIGLFEMKEQGLVSAKEASSLFFSKEEPMEGSAITITLEGSRALILEIQALVSECSFGAPKRLANGFDTNRLNMLIALLEKKLEIPLNRHDVFINVSGGIKISEPACDLAVIASILSSFKNRKIDNKTAFLGEVSLNGRILEAPNLNARLKEMENYGFLKAILPKKPSQKTSIKCYEANVVGKIVEWM.

The segment at 10 to 27 (CQHCGFTSPKWLGKCVQC) adopts a C4-type zinc-finger fold. 96–103 (GSPGVGKS) is an ATP binding site. Residues 253 to 257 (KNRFG) carry the RadA KNRFG motif motif. The segment at 351–448 (DVFINVSGGI…NVVGKIVEWM (98 aa)) is lon-protease-like.

Belongs to the RecA family. RadA subfamily.

Its function is as follows. DNA-dependent ATPase involved in processing of recombination intermediates, plays a role in repairing DNA breaks. Stimulates the branch migration of RecA-mediated strand transfer reactions, allowing the 3' invading strand to extend heteroduplex DNA faster. Binds ssDNA in the presence of ADP but not other nucleotides, has ATPase activity that is stimulated by ssDNA and various branched DNA structures, but inhibited by SSB. Does not have RecA's homology-searching function. The polypeptide is DNA repair protein RadA (Helicobacter pylori (strain J99 / ATCC 700824) (Campylobacter pylori J99)).